The sequence spans 104 residues: Chromogranin-A (104 aa).

Cysteines 17 and 38 form a disulfide.

This sequence belongs to the chromogranin/secretogranin protein family. As to quaternary structure, dimer.

The protein resides in the cytoplasmic vesicle. It localises to the secretory vesicle. Its subcellular location is the secreted. In terms of biological role, chromogranin A probably has a paracrine role in the regulation of secretion or maturation. This chain is Chromogranin-A (CHGA), found in Struthio camelus (Common ostrich).